A 238-amino-acid chain; its full sequence is Laccase-S (238 aa).

2 consecutive Plastocyanin-like domains span residues 4–87 (NVIA…YDPA) and 100–238 (HTII…IARY). N8 carries N-linked (GlcNAc...) asparagine glycosylation. Residues H21, H23, H66, and H68 each coordinate Cu cation. An intrachain disulfide couples C74 to C162. A glycan (N-linked (GlcNAc...) asparagine) is linked at N165.

Belongs to the multicopper oxidase family. Monomer. Cu cation serves as cofactor.

Its subcellular location is the secreted. The catalysed reaction is 4 hydroquinone + O2 = 4 benzosemiquinone + 2 H2O. Activity is strongly promoted by toluene. Activity is promoted by magnesium, potassium, cadmium, zinc, nickel, sodium, lead and manganese ions. Completely inhibited by IAA (cysteine protease inhibitor), PMSF (serine protease inhibitor), DEP (histidine protease inhibitor) and NAI (tyrosine protease inhibitor). Inhibited by ethanol, acetone, SDS, and EDTA. Activity is strongly inhibited by mercury ions. Also inhibited by lithium, aluminum, calcium, barium and iron ions. Lignin degradation and detoxification of lignin-derived products. Has activity towards 2,2'-azino-bis(3-ethylbenzothiazoline-6-sulfonic acid) (ABTS). This chain is Laccase-S, found in Trametes hirsuta (White-rot fungus).